Reading from the N-terminus, the 1382-residue chain is DNA-directed RNA polymerase subunit beta' (1382 aa).

Cysteine 70, cysteine 72, cysteine 85, and cysteine 88 together coordinate Zn(2+). Residues aspartate 460, aspartate 462, and aspartate 464 each contribute to the Mg(2+) site. The Zn(2+) site is built by cysteine 808, cysteine 882, cysteine 889, and cysteine 892.

Belongs to the RNA polymerase beta' chain family. In terms of assembly, the RNAP catalytic core consists of 2 alpha, 1 beta, 1 beta' and 1 omega subunit. When a sigma factor is associated with the core the holoenzyme is formed, which can initiate transcription. Mg(2+) serves as cofactor. Requires Zn(2+) as cofactor.

The enzyme catalyses RNA(n) + a ribonucleoside 5'-triphosphate = RNA(n+1) + diphosphate. Functionally, DNA-dependent RNA polymerase catalyzes the transcription of DNA into RNA using the four ribonucleoside triphosphates as substrates. This is DNA-directed RNA polymerase subunit beta' from Citrifermentans bemidjiense (strain ATCC BAA-1014 / DSM 16622 / JCM 12645 / Bem) (Geobacter bemidjiensis).